Consider the following 363-residue polypeptide: Type-2 angiotensin II receptor (363 aa).

The Extracellular portion of the chain corresponds to 1-45 (MKDNFSFAATSRNITSSLPFDNLNATGTNESAFNCSHKPADKHLE). N-linked (GlcNAc...) asparagine glycosylation is found at N4, N13, N24, N29, and N34. Intrachain disulfides connect C35-C290 and C117-C195. A helical membrane pass occupies residues 46 to 70 (AIPVLYYMIFVIGFAVNIVVVSLFC). Topologically, residues 71–80 (CQKGPKKVSS) are cytoplasmic. Residues 81–104 (IYIFNLAVADLLLLATLPLWATYY) traverse the membrane as a helical segment. Angiotensin II-binding residues include Y103 and Y104. Topologically, residues 105 to 114 (SYRYDWLFGP) are extracellular. A helical transmembrane segment spans residues 115-140 (VMCKVFGSFLTLNMFASIFFITCMSV). The Cytoplasmic portion of the chain corresponds to 141–159 (DRYQSVIYPFLSQRRNPWQ). A helical transmembrane segment spans residues 160–181 (ASYVVPLVWCMACLSSLPTFYF). Angiotensin II is bound by residues R182, Y204, and K215. Topologically, residues 182–206 (RDVRTIEYLGVNACIMAFPPEKYAQ) are extracellular. The helical transmembrane segment at 207–232 (WSAGIALMKNILGFIIPLIFIATCYF) threads the bilayer. The Cytoplasmic portion of the chain corresponds to 233–257 (GIRKHLLKTNSYGKNRITRDQVLKM). A helical membrane pass occupies residues 258 to 281 (AAAVVLAFIICWLPFHVLTFLDAL). Residue D279 participates in angiotensin II binding. Over 282 to 294 (TWMGIINSCEVIA) the chain is Extracellular. The helical transmembrane segment at 295–320 (VIDLALPFAILLGFTNSCVNPFLYCF) threads the bilayer. Residue D297 participates in angiotensin II binding. Residues 321–363 (VGNRFQQKLRSVFRVPITWLQGKRETMSCRKSSSLREMDTFVS) are Cytoplasmic-facing. The segment at 324-333 (RFQQKLRSVF) is helix VIII. Residue S354 is modified to Phosphoserine; by PKC.

This sequence belongs to the G-protein coupled receptor 1 family. Interacts with MTUS1. In terms of tissue distribution, abundant expression in fetal tissues, immature brain, skin wound and atretic ovarian follicles.

It localises to the cell membrane. Receptor for angiotensin II, a vasoconstricting peptide. Signals primarily via a non-canonical G-protein- and beta-arrestin independent pathways. Cooperates with MTUS1 to inhibit ERK2 activation and cell proliferation. In Rattus norvegicus (Rat), this protein is Type-2 angiotensin II receptor.